A 403-amino-acid polypeptide reads, in one-letter code: Ribosomal RNA large subunit methyltransferase I (403 aa).

One can recognise a PUA domain in the interval 9-88; sequence YPRLVLSKGR…ESIDIAFFTR (80 aa).

It belongs to the methyltransferase superfamily. RlmI family.

It is found in the cytoplasm. It catalyses the reaction cytidine(1962) in 23S rRNA + S-adenosyl-L-methionine = 5-methylcytidine(1962) in 23S rRNA + S-adenosyl-L-homocysteine + H(+). Its function is as follows. Specifically methylates the cytosine at position 1962 (m5C1962) of 23S rRNA. The protein is Ribosomal RNA large subunit methyltransferase I of Salmonella agona (strain SL483).